A 642-amino-acid polypeptide reads, in one-letter code: Threonine--tRNA ligase (642 aa).

The TGS domain occupies 1–61; sequence MPVITLPDGS…ETDAELSIIT (61 aa). The interval 243 to 534 is catalytic; it reads DHRKIGKQLD…LIEEYAGRFP (292 aa). Residues Cys334, His385, and His511 each coordinate Zn(2+).

The protein belongs to the class-II aminoacyl-tRNA synthetase family. In terms of assembly, homodimer. Zn(2+) serves as cofactor.

The protein localises to the cytoplasm. It catalyses the reaction tRNA(Thr) + L-threonine + ATP = L-threonyl-tRNA(Thr) + AMP + diphosphate + H(+). Functionally, catalyzes the attachment of threonine to tRNA(Thr) in a two-step reaction: L-threonine is first activated by ATP to form Thr-AMP and then transferred to the acceptor end of tRNA(Thr). Also edits incorrectly charged L-seryl-tRNA(Thr). This chain is Threonine--tRNA ligase, found in Shewanella sp. (strain ANA-3).